A 368-amino-acid chain; its full sequence is DNA replication and repair protein RecF (368 aa).

30–37 (GNNAQGKT) contributes to the ATP binding site.

Belongs to the RecF family.

Its subcellular location is the cytoplasm. The RecF protein is involved in DNA metabolism; it is required for DNA replication and normal SOS inducibility. RecF binds preferentially to single-stranded, linear DNA. It also seems to bind ATP. This chain is DNA replication and repair protein RecF, found in Streptococcus pyogenes serotype M12 (strain MGAS2096).